A 675-amino-acid chain; its full sequence is PTS system glucose-specific EIICBA component (675 aa).

Residues 3-414 (KKFFGQLQRI…FNFKTPGRED (412 aa)) enclose the PTS EIIC type-1 domain. 11 helical membrane passes run 16–36 (LMLP…GNAF), 63–83 (AGGI…AIGL), 89–109 (VAAI…GMFL), 126–146 (VLGI…GALA), 170–190 (FVPI…AIIW), 199–219 (AFSE…FGFI), 273–293 (FMQG…LAIY), 303–323 (VVAG…ITEP), 329–349 (LFVA…SFLI), 355–375 (LHLG…GILP), and 383–403 (VIPV…FLIV). The region spanning 425–506 (SELPFKVLDA…QQIMDGKITS (82 aa)) is the PTS EIIB type-1 domain. The Phosphocysteine intermediate; for EIIB activity role is filled by cysteine 447. Positions 547–651 (DKVFSEKMMG…STITPIVVTN (105 aa)) constitute a PTS EIIA type-1 domain. The active-site Tele-phosphohistidine intermediate; for EIIA activity is histidine 599.

Its subcellular location is the cell membrane. The catalysed reaction is N(pros)-phospho-L-histidyl-[protein] + D-glucose(out) = D-glucose 6-phosphate(in) + L-histidyl-[protein]. With respect to regulation, inhibited by 2-deoxyglucose and methyl beta-D-glucoside, but not by methyl alpha-D-glucoside, p-nitrophenyl alpha-D-glucoside, o-nitrophenyl beta-D-glucoside and salicin. Functionally, the phosphoenolpyruvate-dependent sugar phosphotransferase system (sugar PTS), a major carbohydrate active transport system, catalyzes the phosphorylation of incoming sugar substrates concomitantly with their translocation across the cell membrane. This system is involved in glucose transport. Cannot transport galactose, fructose, mannose, cellobiose, sucrose, maltose, lactose, melibiose and trehalose, as well as N-acetylglucosamine. This is PTS system glucose-specific EIICBA component (ptsG) from Staphylococcus carnosus (strain TM300).